A 262-amino-acid chain; its full sequence is Taurine import ATP-binding protein TauB (262 aa).

The ABC transporter domain maps to 4–233; the sequence is LELERISAQY…RYAAGESARA (230 aa). 38–45 provides a ligand contact to ATP; the sequence is GPSGSGKT.

It belongs to the ABC transporter superfamily. Taurine importer (TC 3.A.1.17.1) family. The complex is composed of two ATP-binding proteins (TauB), two transmembrane proteins (TauC) and a solute-binding protein (TauA).

The protein resides in the cell inner membrane. The catalysed reaction is taurine(out) + ATP + H2O = taurine(in) + ADP + phosphate + H(+). In terms of biological role, part of the ABC transporter complex TauABC involved in taurine import. Responsible for energy coupling to the transport system. The chain is Taurine import ATP-binding protein TauB from Pseudomonas putida (strain ATCC 47054 / DSM 6125 / CFBP 8728 / NCIMB 11950 / KT2440).